Reading from the N-terminus, the 185-residue chain is CASP-like protein SELMODRAFT_413556 (185 aa).

Residues 1–89 (MATLPLSLIF…AVTVLFYLAK (89 aa)) are Cytoplasmic-facing. Residues 90–110 (LVFGILGLALSIIWLLHIIVF) traverse the membrane as a helical segment. At 111–131 (MLVNPPAFPFLNQVFIQLDSA) the chain is on the extracellular side. A helical transmembrane segment spans residues 132 to 152 (WGLLGTTAFAIFCYYLIMSVI). At 153–163 (SGEMHSIHPMK) the chain is on the cytoplasmic side. Residues 164-184 (YQGTLMNSFLFNVAIILLCST) traverse the membrane as a helical segment. A topological domain (extracellular) is located at residue R185.

Belongs to the Casparian strip membrane proteins (CASP) family. Homodimer and heterodimers.

Its subcellular location is the cell membrane. In Selaginella moellendorffii (Spikemoss), this protein is CASP-like protein SELMODRAFT_413556.